We begin with the raw amino-acid sequence, 341 residues long: Retinol dehydrogenase 10-B (341 aa).

The helical; Signal-anchor transmembrane segment at 3–23 (IVLEFFLVTFRVLWAFVLAAA) threads the bilayer. 40-64 (LITGAGSGLGRLFALEFARRRAQLV) provides a ligand contact to NADP(+). Serine 197 contributes to the substrate binding site. The active-site Proton acceptor is tyrosine 210.

The protein belongs to the short-chain dehydrogenases/reductases (SDR) family.

It is found in the microsome membrane. The protein resides in the endoplasmic reticulum membrane. It carries out the reaction all-trans-retinol + NADP(+) = all-trans-retinal + NADPH + H(+). It participates in cofactor metabolism; retinol metabolism. In terms of biological role, retinol dehydrogenase with a clear preference for NADP. Converts all-trans-retinol to all-trans-retinal. Has no detectable activity towards 11-cis-retinol, 9-cis-retinol and 13-cis-retinol. The protein is Retinol dehydrogenase 10-B (rdh10-b) of Xenopus laevis (African clawed frog).